We begin with the raw amino-acid sequence, 499 residues long: MEFSVQSSTIEQLQTECLIVGVYQDHQLSSAAVQLDQVSGGYLTRLLQMGDLDGSVGQSLLLHNVPNIKSARVLLVGCGKQDELTESQYKKIMQQMMHAINATAVQQAVCFLTELMVKQRTIYWNIRFAIESIQASRYVYDVFKSIKAKVVGKLTQIIFNVANQQDLLEAERGLKHAQAIASGMIYAKNMANCPPNICNPAYLAELAQGLATDYQQIQTRIVDEAEMATLGMNAYLAVSQGSHNPAFLSVIEYNHHPDPSAKPIVLVGKGLTFDAGGISLKPSDAMDEMKYDMGGAAAVYGTMKALAEMQLPLNVVGILAGCENMPDGNAYRPGDILTTMNGLTVEVLNTDAEGRLVLCDALTYVERFDPACVIDIATLTGACMVALGTHNSGLMSTHNELADELFTAASQANDKVWRLPLGEEYQEQLKSNFADLANIGGRFGGAITAGQFLSNFTQKYRWAHLDIAGTAWQSGVAKGATGRPVPLLAQFLINRAQQE.

The Mn(2+) site is built by Lys269 and Asp274. The active site involves Lys281. The Mn(2+) site is built by Asp292, Asp351, and Glu353. Arg355 is an active-site residue.

The protein belongs to the peptidase M17 family. It depends on Mn(2+) as a cofactor.

Its subcellular location is the cytoplasm. The catalysed reaction is Release of an N-terminal amino acid, Xaa-|-Yaa-, in which Xaa is preferably Leu, but may be other amino acids including Pro although not Arg or Lys, and Yaa may be Pro. Amino acid amides and methyl esters are also readily hydrolyzed, but rates on arylamides are exceedingly low.. It catalyses the reaction Release of an N-terminal amino acid, preferentially leucine, but not glutamic or aspartic acids.. Presumably involved in the processing and regular turnover of intracellular proteins. Catalyzes the removal of unsubstituted N-terminal amino acids from various peptides. In Haemophilus ducreyi (strain 35000HP / ATCC 700724), this protein is Probable cytosol aminopeptidase.